The chain runs to 335 residues: Nucleoid-associated protein SeAg_B2375 (335 aa).

The protein belongs to the YejK family.

It localises to the cytoplasm. Its subcellular location is the nucleoid. The protein is Nucleoid-associated protein SeAg_B2375 of Salmonella agona (strain SL483).